Here is an 86-residue protein sequence, read N- to C-terminus: Putative defensin-like protein 9 (86 aa).

The N-terminal stretch at 1–29 (MKSSMQLISTLFFLVILVVAPGMKMVVEG) is a signal peptide. Q30 bears the Pyrrolidone carboxylic acid mark. 4 cysteine pairs are disulfide-bonded: C34-C79, C45-C65, C51-C73, and C55-C75.

Belongs to the DEFL family.

The protein resides in the secreted. This Arabidopsis thaliana (Mouse-ear cress) protein is Putative defensin-like protein 9 (LCR76).